Here is a 218-residue protein sequence, read N- to C-terminus: Copper acquisition factor BIM1 (218 aa).

The first 19 residues, 1-19 (MFALKSILVTSLITSTALA), serve as a signal peptide directing secretion. Cu(2+) is bound by residues His20 and His65. N-linked (GlcNAc...) asparagine glycosylation is found at Asn87, Asn91, and Asn124. A Cu(2+)-binding site is contributed by Asp138. N-linked (GlcNAc...) asparagine glycosylation is found at Asn158 and Asn170. Residues 160-194 (TCTNDASKASNATSTSSGSATATSAAATSSSSGTS) are disordered. A compositionally biased stretch (low complexity) spans 165-194 (ASKASNATSTSSGSATATSAAATSSSSGTS). Ser190 carries the GPI-anchor amidated serine lipid modification. A propeptide spans 191–218 (SGTSGAIKEVVGFGALSLALGIAGLIIL) (removed in mature form).

This sequence belongs to the X325 family. As to quaternary structure, interacts with the CUF1-dependent copper transporter CTR1. It depends on Cu(2+) as a cofactor.

The protein localises to the cell membrane. In terms of biological role, lytic polysaccharide monooxygenase-like protein that has diverged to biological functions other than polysaccharide degradation since it does not perform oxidative cleavage of polysaccharides. Cell surface-bound protein that functions in the copper-accumulation pathway shared by the CUF1-dependent copper transporter CTR1. Involved in maintaining cell wall integrity during copper deficiency. Binds Cu(2+) with an estimated 1:1 stoichiometry and might serve as an extracellular copper ligand. FRE4 and FRE7 metalloreductases probably function together with CTR1 and BIM1 to liberate the Cu(2+) bound to the BIM1 copper-binding site for subsequent import of Cu(+) into the cell by CTR1, via the reduction of BIM1-bound Cu(2+) to Cu(+) to reduce binding affinity for BIM1 but increase affinity for CTR1. Facilitates copper acquisition in the brain of mammalian hosts and acts as a copper-dependent virulence trait in fungal meningitis. While BIM1 plays a critical role in cryptococcal meningitis, at least in part through its role in copper acquisition, it could play additional roles during copper limitation or as a means to invade and colonize host tissues in the brain, by compromising host carbohydrate integrity via its lytic polysaccharide monooxygenase (LPMO) activity, which has still to be determined. The sequence is that of Copper acquisition factor BIM1 from Cryptococcus neoformans var. grubii serotype A (strain H99 / ATCC 208821 / CBS 10515 / FGSC 9487) (Filobasidiella neoformans var. grubii).